The sequence spans 148 residues: MAEAGQRLVLAFDFGTRRIGVAVGNEMLGSATALAPLPARDGIPDWQQIAALLEEWQPDLLVVGLPLNMDGTESDMSRRARKFGNRLHGRFGKPVEVFDERGSTRAAKRIARDAGHRGNYRDDGVDGIAAQLILESFFADDTFLQRMP.

The protein belongs to the YqgF nuclease family.

It localises to the cytoplasm. In terms of biological role, could be a nuclease involved in processing of the 5'-end of pre-16S rRNA. The sequence is that of Putative pre-16S rRNA nuclease from Chromohalobacter salexigens (strain ATCC BAA-138 / DSM 3043 / CIP 106854 / NCIMB 13768 / 1H11).